The sequence spans 274 residues: Pantothenate synthetase (274 aa).

27 to 34 serves as a coordination point for ATP; it reads MGALHQGH. The active-site Proton donor is the histidine 34. Residue glutamine 58 coordinates (R)-pantoate. Glutamine 58 serves as a coordination point for beta-alanine. ATP is bound at residue 144-147; it reads GKKD. Position 150 (glutamine 150) interacts with (R)-pantoate. ATP contacts are provided by residues isoleucine 173 and 181–184; that span reads LSSR.

The protein belongs to the pantothenate synthetase family. In terms of assembly, homodimer.

It localises to the cytoplasm. It carries out the reaction (R)-pantoate + beta-alanine + ATP = (R)-pantothenate + AMP + diphosphate + H(+). It functions in the pathway cofactor biosynthesis; (R)-pantothenate biosynthesis; (R)-pantothenate from (R)-pantoate and beta-alanine: step 1/1. Its function is as follows. Catalyzes the condensation of pantoate with beta-alanine in an ATP-dependent reaction via a pantoyl-adenylate intermediate. The polypeptide is Pantothenate synthetase (Sulfurovum sp. (strain NBC37-1)).